A 219-amino-acid polypeptide reads, in one-letter code: Leucyl/phenylalanyl-tRNA--protein transferase (219 aa).

It belongs to the L/F-transferase family.

It localises to the cytoplasm. It carries out the reaction N-terminal L-lysyl-[protein] + L-leucyl-tRNA(Leu) = N-terminal L-leucyl-L-lysyl-[protein] + tRNA(Leu) + H(+). It catalyses the reaction N-terminal L-arginyl-[protein] + L-leucyl-tRNA(Leu) = N-terminal L-leucyl-L-arginyl-[protein] + tRNA(Leu) + H(+). The enzyme catalyses L-phenylalanyl-tRNA(Phe) + an N-terminal L-alpha-aminoacyl-[protein] = an N-terminal L-phenylalanyl-L-alpha-aminoacyl-[protein] + tRNA(Phe). Functions in the N-end rule pathway of protein degradation where it conjugates Leu, Phe and, less efficiently, Met from aminoacyl-tRNAs to the N-termini of proteins containing an N-terminal arginine or lysine. This chain is Leucyl/phenylalanyl-tRNA--protein transferase, found in Leptospira interrogans serogroup Icterohaemorrhagiae serovar copenhageni (strain Fiocruz L1-130).